The following is a 282-amino-acid chain: 4-diphosphocytidyl-2-C-methyl-D-erythritol kinase (282 aa).

Residue K12 is part of the active site. Residue 95–105 (PMGGGIGGGSS) participates in ATP binding. D137 is a catalytic residue.

Belongs to the GHMP kinase family. IspE subfamily.

The catalysed reaction is 4-CDP-2-C-methyl-D-erythritol + ATP = 4-CDP-2-C-methyl-D-erythritol 2-phosphate + ADP + H(+). It participates in isoprenoid biosynthesis; isopentenyl diphosphate biosynthesis via DXP pathway; isopentenyl diphosphate from 1-deoxy-D-xylulose 5-phosphate: step 3/6. Its function is as follows. Catalyzes the phosphorylation of the position 2 hydroxy group of 4-diphosphocytidyl-2C-methyl-D-erythritol. The polypeptide is 4-diphosphocytidyl-2-C-methyl-D-erythritol kinase (Pseudomonas aeruginosa (strain UCBPP-PA14)).